We begin with the raw amino-acid sequence, 312 residues long: Malate dehydrogenase (312 aa).

Residues 7–13 (GASGGIG) and D34 contribute to the NAD(+) site. Residues R81 and R87 each coordinate substrate. NAD(+) contacts are provided by residues N94 and 117–119 (ITN). The substrate site is built by N119 and R153. H177 functions as the Proton acceptor in the catalytic mechanism. M227 provides a ligand contact to NAD(+).

This sequence belongs to the LDH/MDH superfamily. MDH type 1 family. As to quaternary structure, homodimer.

It carries out the reaction (S)-malate + NAD(+) = oxaloacetate + NADH + H(+). In terms of biological role, catalyzes the reversible oxidation of malate to oxaloacetate. The polypeptide is Malate dehydrogenase (Actinobacillus succinogenes (strain ATCC 55618 / DSM 22257 / CCUG 43843 / 130Z)).